We begin with the raw amino-acid sequence, 637 residues long: Transcription factor PHYTOCHROME INTERACTING FACTOR-LIKE 15 (637 aa).

A compositionally biased stretch (gly residues) spans 35-46 (FFGGTGGGGGGS). Disordered regions lie at residues 35-54 (FFGG…QERQ), 146-213 (ASLP…EGVM), and 356-397 (ECSA…RRRR). Residues 149–170 (PASNHNGATNNRNAPVATTTTR) show a composition bias toward polar residues. Residues 384–397 (RTAEVHNLSERRRR) are basic motif. Basic and acidic residues predominate over residues 384–397 (RTAEVHNLSERRRR). One can recognise a bHLH domain in the interval 384–433 (RTAEVHNLSERRRRDRINEKMRALQELIPNCNKIDKASMLDEAIEYLKTL). Residues 398 to 433 (DRINEKMRALQELIPNCNKIDKASMLDEAIEYLKTL) are helix-loop-helix motif. Residues 601–637 (GDNENFRIPSSAQTKSSQFSDGTGKGTNARERDGAET) are disordered. A compositionally biased stretch (polar residues) spans 608 to 621 (IPSSAQTKSSQFSD). The segment covering 628–637 (NARERDGAET) has biased composition (basic and acidic residues).

Belongs to the bHLH protein family. Interacts with LF and PRR1.

Its subcellular location is the nucleus. Transcription factor that may act as negative regulator of phyB-dependent light signal transduction. This Oryza sativa subsp. japonica (Rice) protein is Transcription factor PHYTOCHROME INTERACTING FACTOR-LIKE 15.